The primary structure comprises 108 residues: Ribonuclease P protein component 4 (108 aa).

Positions 67, 70, 93, and 96 each coordinate Zn(2+).

This sequence belongs to the eukaryotic/archaeal RNase P protein component 4 family. As to quaternary structure, consists of a catalytic RNA component and at least 4-5 protein subunits. Zn(2+) is required as a cofactor.

It is found in the cytoplasm. It catalyses the reaction Endonucleolytic cleavage of RNA, removing 5'-extranucleotides from tRNA precursor.. Its function is as follows. Part of ribonuclease P, a protein complex that generates mature tRNA molecules by cleaving their 5'-ends. In Methanococcoides burtonii (strain DSM 6242 / NBRC 107633 / OCM 468 / ACE-M), this protein is Ribonuclease P protein component 4.